The sequence spans 545 residues: CTP synthase (545 aa).

The interval 1–266 is amidoligase domain; the sequence is MATNYIFVTG…DTFVCDRFRL (266 aa). A CTP-binding site is contributed by S14. Residue S14 coordinates UTP. ATP contacts are provided by residues 15–20 and D72; that span reads SLGKGI. Mg(2+)-binding residues include D72 and E140. CTP-binding positions include 147-149, 187-192, and K223; these read DIE and KTKPTQ. Residues 187–192 and K223 each bind UTP; that span reads KTKPTQ. 239–241 provides a ligand contact to ATP; that stretch reads KDV. Residues 291-542 enclose the Glutamine amidotransferase type-1 domain; it reads TIGMVGKYVE…VKAAKDYQDS (252 aa). Residue G352 participates in L-glutamine binding. C379 (nucleophile; for glutamine hydrolysis) is an active-site residue. Residues 380-383, E403, and R470 contribute to the L-glutamine site; that span reads LGMQ. Residues H515 and E517 contribute to the active site.

This sequence belongs to the CTP synthase family. In terms of assembly, homotetramer.

It catalyses the reaction UTP + L-glutamine + ATP + H2O = CTP + L-glutamate + ADP + phosphate + 2 H(+). The enzyme catalyses L-glutamine + H2O = L-glutamate + NH4(+). It carries out the reaction UTP + NH4(+) + ATP = CTP + ADP + phosphate + 2 H(+). Its pathway is pyrimidine metabolism; CTP biosynthesis via de novo pathway; CTP from UDP: step 2/2. Allosterically activated by GTP, when glutamine is the substrate; GTP has no effect on the reaction when ammonia is the substrate. The allosteric effector GTP functions by stabilizing the protein conformation that binds the tetrahedral intermediate(s) formed during glutamine hydrolysis. Inhibited by the product CTP, via allosteric rather than competitive inhibition. Functionally, catalyzes the ATP-dependent amination of UTP to CTP with either L-glutamine or ammonia as the source of nitrogen. Regulates intracellular CTP levels through interactions with the four ribonucleotide triphosphates. This is CTP synthase from Actinobacillus pleuropneumoniae serotype 7 (strain AP76).